A 378-amino-acid polypeptide reads, in one-letter code: Ribosomal RNA large subunit methyltransferase G (378 aa).

Belongs to the methyltransferase superfamily. RlmG family.

The protein resides in the cytoplasm. The catalysed reaction is guanosine(1835) in 23S rRNA + S-adenosyl-L-methionine = N(2)-methylguanosine(1835) in 23S rRNA + S-adenosyl-L-homocysteine + H(+). In terms of biological role, specifically methylates the guanine in position 1835 (m2G1835) of 23S rRNA. This Salmonella agona (strain SL483) protein is Ribosomal RNA large subunit methyltransferase G.